Here is a 130-residue protein sequence, read N- to C-terminus: Small ribosomal subunit protein uS8 (130 aa).

Belongs to the universal ribosomal protein uS8 family. In terms of assembly, part of the 30S ribosomal subunit.

One of the primary rRNA binding proteins, it binds directly to 16S rRNA central domain where it helps coordinate assembly of the platform of the 30S subunit. In Methanocorpusculum labreanum (strain ATCC 43576 / DSM 4855 / Z), this protein is Small ribosomal subunit protein uS8.